Reading from the N-terminus, the 635-residue chain is Paraneoplastic antigen-like protein 8B (635 aa).

Disordered stretches follow at residues 115-202 (PTQA…DESL), 260-332 (TDKS…NPEF), and 492-635 (AARE…PKCR). Residues 133-147 (SETQAQDSGEVTGQA) are compositionally biased toward polar residues. Residues 156 to 183 (NPRRGRRGRRNRTRRNRLTQKGKKRSRG) are compositionally biased toward basic residues. Over residues 261–273 (DKSKKEEAEKEPA) the composition is skewed to basic and acidic residues. Composition is skewed to acidic residues over residues 302 to 329 (PDEEPVDSDTSESDSQESGDQETEELDN) and 502 to 524 (GSEEASDEQSEEESEDTESEASE). Basic residues predominate over residues 531–540 (RKPRAKRART). Low complexity predominate over residues 541-557 (APRGLTPAGAPPTASGA). Basic residues-rich tracts occupy residues 558-568 (RKTRAGGRGRG) and 619-635 (ARGKKARRGRRLPPKCR).

It belongs to the PNMA family.

The polypeptide is Paraneoplastic antigen-like protein 8B (Homo sapiens (Human)).